We begin with the raw amino-acid sequence, 356 residues long: Inositol monophosphatase 3 (356 aa).

A helical transmembrane segment spans residues 11–31; the sequence is LGIGVFCLLGLGVLYHVYSGF. Mg(2+) contacts are provided by glutamate 127, aspartate 167, leucine 169, aspartate 170, and aspartate 293. Glutamate 127 contributes to the substrate binding site. Substrate contacts are provided by residues 169–172 and aspartate 293; that span reads LDAT.

Belongs to the inositol monophosphatase superfamily. Mg(2+) serves as cofactor.

It localises to the membrane. The catalysed reaction is a myo-inositol phosphate + H2O = myo-inositol + phosphate. The protein operates within polyol metabolism; myo-inositol biosynthesis; myo-inositol from D-glucose 6-phosphate: step 2/2. The chain is Inositol monophosphatase 3 (bpnt2) from Xenopus tropicalis (Western clawed frog).